The chain runs to 150 residues: Transcriptional repressor NrdR (150 aa).

A zinc finger lies at 3–33 (CPFCGGESRVLESRPASDEEAVRRRRECLAC). Positions 48–138 (LIVVKKDGRR…VYREFKDLNE (91 aa)) constitute an ATP-cone domain.

It belongs to the NrdR family. Zn(2+) serves as cofactor.

Its function is as follows. Negatively regulates transcription of bacterial ribonucleotide reductase nrd genes and operons by binding to NrdR-boxes. This is Transcriptional repressor NrdR from Symbiobacterium thermophilum (strain DSM 24528 / JCM 14929 / IAM 14863 / T).